Here is a 397-residue protein sequence, read N- to C-terminus: Phosphoglycerate kinase (397 aa).

Substrate is bound by residues Asp25–Asn27, Arg41, His64–Arg67, Arg118, and Arg151. ATP contacts are provided by residues Lys202, Glu324, and Gly350–Thr353.

This sequence belongs to the phosphoglycerate kinase family. In terms of assembly, monomer.

It is found in the cytoplasm. It catalyses the reaction (2R)-3-phosphoglycerate + ATP = (2R)-3-phospho-glyceroyl phosphate + ADP. Its pathway is carbohydrate degradation; glycolysis; pyruvate from D-glyceraldehyde 3-phosphate: step 2/5. In Janthinobacterium sp. (strain Marseille) (Minibacterium massiliensis), this protein is Phosphoglycerate kinase.